The primary structure comprises 895 residues: Ras and Rab interactor 2 (895 aa).

The SH2 domain occupies tryptophan 97 to tyrosine 190. The segment at leucine 284–leucine 361 is disordered. Residues serine 306–alanine 315 are compositionally biased toward pro residues. A compositionally biased stretch (polar residues) spans threonine 328 to valine 338. Serine 366 is modified (phosphoserine). 2 disordered regions span residues glycine 373–leucine 442 and serine 460–lysine 481. Low complexity predominate over residues serine 430 to serine 441. Residue serine 501 is modified to Phosphoserine. Threonine 509 carries the phosphothreonine modification. Residues aspartate 618 to alanine 757 form the VPS9 domain. In terms of domain architecture, Ras-associating spans phenylalanine 787–asparagine 878.

It belongs to the RIN (Ras interaction/interference) family. In terms of assembly, homotetramer; probably composed of anti-parallel linkage of two parallel dimers. Interacts with Ras. Interacts with RAB5B, with a much higher affinity for GTP-bound activated RAB5B. Does not interact with other members of the Rab family. As to expression, widely expressed. Expressed in heart, kidney, lung placenta. Expressed at low level in skeletal muscle, spleen and peripheral blood.

Its subcellular location is the cytoplasm. Its function is as follows. Ras effector protein. May function as an upstream activator and/or downstream effector for RAB5B in endocytic pathway. May function as a guanine nucleotide exchange (GEF) of RAB5B, required for activating the RAB5 proteins by exchanging bound GDP for free GTP. This Homo sapiens (Human) protein is Ras and Rab interactor 2 (RIN2).